Reading from the N-terminus, the 332-residue chain is Glycerol-3-phosphate dehydrogenase [NAD(P)+] (332 aa).

Residues tryptophan 11, arginine 30, and lysine 108 each coordinate NADPH. Residues lysine 108, glycine 137, and serine 139 each coordinate sn-glycerol 3-phosphate. Residue alanine 141 participates in NADPH binding. The sn-glycerol 3-phosphate site is built by lysine 192, aspartate 245, serine 255, arginine 256, and asparagine 257. The Proton acceptor role is filled by lysine 192. Residue arginine 256 participates in NADPH binding. Positions 280 and 282 each coordinate NADPH.

This sequence belongs to the NAD-dependent glycerol-3-phosphate dehydrogenase family.

Its subcellular location is the cytoplasm. It carries out the reaction sn-glycerol 3-phosphate + NAD(+) = dihydroxyacetone phosphate + NADH + H(+). The catalysed reaction is sn-glycerol 3-phosphate + NADP(+) = dihydroxyacetone phosphate + NADPH + H(+). Its pathway is membrane lipid metabolism; glycerophospholipid metabolism. Catalyzes the reduction of the glycolytic intermediate dihydroxyacetone phosphate (DHAP) to sn-glycerol 3-phosphate (G3P), the key precursor for phospholipid synthesis. The polypeptide is Glycerol-3-phosphate dehydrogenase [NAD(P)+] (Paraburkholderia phymatum (strain DSM 17167 / CIP 108236 / LMG 21445 / STM815) (Burkholderia phymatum)).